A 375-amino-acid chain; its full sequence is Actin (375 aa).

It belongs to the actin family.

Its subcellular location is the cytoplasm. It is found in the cytoskeleton. The enzyme catalyses ATP + H2O = ADP + phosphate + H(+). Its function is as follows. Actins are highly conserved proteins that are involved in various types of cell motility and are ubiquitously expressed in all eukaryotic cells. The polypeptide is Actin (Giardia intestinalis (Giardia lamblia)).